We begin with the raw amino-acid sequence, 89 residues long: Phosphocarrier protein HPr (89 aa).

The region spanning 2 to 89 (AKFSAIITDK…TMIDTALIQG (88 aa)) is the HPr domain. The active-site Pros-phosphohistidine intermediate is the His15. Ser46 is modified (phosphoserine; by HPrK/P).

It belongs to the HPr family.

Its subcellular location is the cytoplasm. Phosphorylation on Ser-46 inhibits the phosphoryl transfer from enzyme I to HPr. In terms of biological role, general (non sugar-specific) component of the phosphoenolpyruvate-dependent sugar phosphotransferase system (sugar PTS). This major carbohydrate active-transport system catalyzes the phosphorylation of incoming sugar substrates concomitantly with their translocation across the cell membrane. The phosphoryl group from phosphoenolpyruvate (PEP) is transferred to the phosphoryl carrier protein HPr by enzyme I. Phospho-HPr then transfers it to the PTS EIIA domain. P-Ser-HPr interacts with the catabolite control protein A (CcpA), forming a complex that binds to DNA at the catabolite response elements cre, operator sites preceding a large number of catabolite-regulated genes. Thus, P-Ser-HPr is a corepressor in carbon catabolite repression (CCR), a mechanism that allows bacteria to coordinate and optimize the utilization of available carbon sources. P-Ser-HPr also plays a role in inducer exclusion, in which it probably interacts with several non-PTS permeases and inhibits their transport activity. In Mycoplasma capricolum subsp. capricolum (strain California kid / ATCC 27343 / NCTC 10154), this protein is Phosphocarrier protein HPr (ptsH).